The chain runs to 466 residues: Proline--tRNA ligase (466 aa).

Belongs to the class-II aminoacyl-tRNA synthetase family. ProS type 3 subfamily. As to quaternary structure, homodimer.

The protein resides in the cytoplasm. It catalyses the reaction tRNA(Pro) + L-proline + ATP = L-prolyl-tRNA(Pro) + AMP + diphosphate. Catalyzes the attachment of proline to tRNA(Pro) in a two-step reaction: proline is first activated by ATP to form Pro-AMP and then transferred to the acceptor end of tRNA(Pro). The sequence is that of Proline--tRNA ligase from Picrophilus torridus (strain ATCC 700027 / DSM 9790 / JCM 10055 / NBRC 100828 / KAW 2/3).